The primary structure comprises 518 residues: MRDPSSLYSGFPAGSQYESVEPPSLALLSSIDQEQLPVATGQSYNHSVQHWPQPWPPLSLYREGGTWSPDRGSMYGLSPGTHEGSCTHTHEGPKDSMAGDQTRSRKSKKKNYHRYNKPPYSYLAMIALVIQNSPEKRLKLSQILKEVSTLFPFFNGDYMGWKDSIRHNLSSSDCFKKILKDPGKPQAKGNFWTVDVSRIPLDAMKLQNTALTRGGSDYFVQDLAPYILHNYKYEHNAGAYGHQMPPSHARSLSLAEDSQQTNTGGKLNTSFMIDSLLHDLQEVDLPDASRNLENQRISPAVAMNNMWSSAPLLYTHSKPTRNARSPGLSTIHSTYSSSSSSISTISPVGFQKEQEKSGRQTQRVGHPIKRSREDDDCSTTSSDPDTGNYSPIEPPKKMPLLSLDLPTSYTKSVAPNVVAPPSVLPFFHFPRFTYYNYGPSPYMTPPYWGFPHPTNSGGDSPRGPQSPLDLDNMLRAMPPNKSVFDVLTSHPGDLVHPSFLSQCLGSSGSPYPSRQGLM.

Positions 72 to 113 (GSMYGLSPGTHEGSCTHTHEGPKDSMAGDQTRSRKSKKKNYH) are disordered. The span at 104–113 (SRKSKKKNYH) shows a compositional bias: basic residues. Residues 117 to 213 (KPPYSYLAMI…MKLQNTALTR (97 aa)) constitute a DNA-binding region (fork-head). The tract at residues 318-397 (KPTRNARSPG…NYSPIEPPKK (80 aa)) is disordered. Residues 329-346 (STIHSTYSSSSSSISTIS) show a composition bias toward low complexity. Residues 380 to 506 (TSSDPDTGNY…PSFLSQCLGS (127 aa)) are SMAD-interaction domain (SID). Positions 405 to 409 (LPTSY) match the Fast/FoxH1 motif 1 (FM1) motif. Positions 415–421 (PNVVAPP) match the Fast/FoxH1 motif 2 (FM2) motif. The SMAD interaction motif (SIM) motif lies at 470–491 (LDNMLRAMPPNKSVFDVLTSHP).

ARF1 contains 2 smad2s, 1 smad4 and 1 foxh1/fast-1 protein. Interaction with smad4 is most likely indirect through interaction with the MH2 domain of smad2. Binds to the MH2 domain of smad3, which can incorporate into the ARF1 complex. The ARF1 and ARF2 complexes are activated by distinct TGF-beta family members; formation of ARF1 is promoted by activin. Interacts (via Fork-head domain) with gtf2ird1/wbscr11 (via repeats 4-5). As to expression, highly expressed in the animal cap (prospective ectoderm) and prospective mesoderm of stage 10.25 embryos.

It is found in the nucleus. In terms of biological role, transcriptional activator. Recognizes and binds to the DNA sequence 5'-TGT[GT][GT]ATT-3'. Upon TGF-beta induction, forms a transcriptionally active complex with smad2 and smad4 called activin-responsive factor 1 (ARF1), which binds a site on the mix-B/mix.2 promoter called the activin response element (ARE). Binds to activated smads and the ARE with much lower affinity than fast3. Necessary for the first steps in mesoderm specification, directly inducing mesodermal genes. Acts with fast3 to control the convergent extension movements of gastrulation. Binds to the proximal element (PE) of the gsc gene and cooperates with gtf2ird1/wbscr11 and SMAD proteins to regulate gsc transcription. This chain is Forkhead box protein H1 (foxh1), found in Xenopus laevis (African clawed frog).